Here is a 134-residue protein sequence, read N- to C-terminus: Protein LctB (134 aa).

This Geobacillus stearothermophilus (Bacillus stearothermophilus) protein is Protein LctB (lctB).